The chain runs to 346 residues: Biotin synthase (346 aa).

One can recognise a Radical SAM core domain in the interval 38-256; it reads RQVQVSTLLS…IAVARIMMPT (219 aa). Cysteine 53, cysteine 57, and cysteine 60 together coordinate [4Fe-4S] cluster. Residues cysteine 97, cysteine 128, cysteine 188, and arginine 260 each contribute to the [2Fe-2S] cluster site.

Belongs to the radical SAM superfamily. Biotin synthase family. In terms of assembly, homodimer. Requires [4Fe-4S] cluster as cofactor. [2Fe-2S] cluster serves as cofactor.

The enzyme catalyses (4R,5S)-dethiobiotin + (sulfur carrier)-SH + 2 reduced [2Fe-2S]-[ferredoxin] + 2 S-adenosyl-L-methionine = (sulfur carrier)-H + biotin + 2 5'-deoxyadenosine + 2 L-methionine + 2 oxidized [2Fe-2S]-[ferredoxin]. It functions in the pathway cofactor biosynthesis; biotin biosynthesis; biotin from 7,8-diaminononanoate: step 2/2. Catalyzes the conversion of dethiobiotin (DTB) to biotin by the insertion of a sulfur atom into dethiobiotin via a radical-based mechanism. This is Biotin synthase from Shigella boydii serotype 18 (strain CDC 3083-94 / BS512).